The chain runs to 129 residues: Lysozyme C (129 aa).

Residues 1 to 129 (KVFGRCELAA…VHAWIRGCRL (129 aa)) form the C-type lysozyme domain. 4 cysteine pairs are disulfide-bonded: cysteine 6/cysteine 127, cysteine 30/cysteine 115, cysteine 64/cysteine 80, and cysteine 76/cysteine 94. Active-site residues include glutamate 35 and aspartate 52.

It belongs to the glycosyl hydrolase 22 family. In terms of assembly, monomer.

It localises to the secreted. It carries out the reaction Hydrolysis of (1-&gt;4)-beta-linkages between N-acetylmuramic acid and N-acetyl-D-glucosamine residues in a peptidoglycan and between N-acetyl-D-glucosamine residues in chitodextrins.. Functionally, lysozymes have primarily a bacteriolytic function; those in tissues and body fluids are associated with the monocyte-macrophage system and enhance the activity of immunoagents. The polypeptide is Lysozyme C (LYZ) (Callipepla californica (California quail)).